The chain runs to 134 residues: DNA-directed RNA polymerase subunit omega (134 aa).

It belongs to the RNA polymerase subunit omega family. As to quaternary structure, the RNAP catalytic core consists of 2 alpha, 1 beta, 1 beta' and 1 omega subunit. When a sigma factor is associated with the core the holoenzyme is formed, which can initiate transcription.

It carries out the reaction RNA(n) + a ribonucleoside 5'-triphosphate = RNA(n+1) + diphosphate. Its function is as follows. Promotes RNA polymerase assembly. Latches the N- and C-terminal regions of the beta' subunit thereby facilitating its interaction with the beta and alpha subunits. This is DNA-directed RNA polymerase subunit omega from Rhizobium johnstonii (strain DSM 114642 / LMG 32736 / 3841) (Rhizobium leguminosarum bv. viciae).